The sequence spans 427 residues: Terminal nucleotidyltransferase 5B (427 aa).

Residues Met1–Leu11 are compositionally biased toward acidic residues. The segment at Met1–Gly46 is disordered. A compositionally biased stretch (low complexity) spans Ala15–Gly30.

It belongs to the TENT family.

Its subcellular location is the cytoplasm. The protein localises to the nucleus. The enzyme catalyses RNA(n) + ATP = RNA(n)-3'-adenine ribonucleotide + diphosphate. Functionally, catalyzes the transfer of one adenosine molecule from an ATP to an mRNA poly(A) tail bearing a 3'-OH terminal group in an ATP hydrolysis-dependent manner. May be involved in maintaining the translation efficiency of at least some genes through preventing degradation of their mRNAs. Prefers RNA molecules that are adenosine-rich close to 3'-end. In addition, may inhibit cell proliferation and cell cycle progression through ubiquitination of beta-catenin/CTNNB1. The protein is Terminal nucleotidyltransferase 5B of Rattus norvegicus (Rat).